Here is a 1125-residue protein sequence, read N- to C-terminus: Non-structural polyprotein 1A (1125 aa).

Residues 131 to 218 (VHQVMEKTRE…QKRLKEKENA (88 aa)) are a coiled coil. The next 6 membrane-spanning stretches (helical) occupy residues 220 to 240 (VSVG…FGLI), 379 to 398 (VMSY…VLAG), 407 to 427 (APFI…CVAV), 437 to 457 (FILF…LLWL), 479 to 499 (ALVY…GVTL), and 507 to 527 (ILMF…CTTI). Active-site charge relay system; for serine protease activity residues include His600, Asp632, and Ser697. Tyr834 carries the O-(5'-phospho-RNA)-tyrosine modification.

It belongs to the astroviridae polyprotein 1A family. In terms of assembly, monomer. Cleaved by the viral and host proteases. The protease is probably autocatalytically cleaved.

The protein localises to the host membrane. It catalyses the reaction RNA(n) + a ribonucleoside 5'-triphosphate = RNA(n+1) + diphosphate. Responsible for the cleavage of the polyprotein into functional products. In terms of biological role, protein covalently attached to the 5' extremity of the genomic and subgenomic RNAs. It may serve as a primer for the replicase. The protein is Non-structural polyprotein 1A (ORF1) of Turkey astrovirus 2 (TAstV-2).